Consider the following 473-residue polypeptide: ATP synthase subunit beta (473 aa).

An ATP-binding site is contributed by 158-165 (GGAGVGKT).

Belongs to the ATPase alpha/beta chains family. As to quaternary structure, F-type ATPases have 2 components, CF(1) - the catalytic core - and CF(0) - the membrane proton channel. CF(1) has five subunits: alpha(3), beta(3), gamma(1), delta(1), epsilon(1). CF(0) has three main subunits: a(1), b(2) and c(9-12). The alpha and beta chains form an alternating ring which encloses part of the gamma chain. CF(1) is attached to CF(0) by a central stalk formed by the gamma and epsilon chains, while a peripheral stalk is formed by the delta and b chains.

The protein resides in the cell membrane. The catalysed reaction is ATP + H2O + 4 H(+)(in) = ADP + phosphate + 5 H(+)(out). In terms of biological role, produces ATP from ADP in the presence of a proton gradient across the membrane. The catalytic sites are hosted primarily by the beta subunits. The protein is ATP synthase subunit beta of Priestia megaterium (strain ATCC 12872 / QMB1551) (Bacillus megaterium).